Consider the following 306-residue polypeptide: Homoserine kinase (306 aa).

Residue 84–94 (PAGLGLGSSGA) participates in ATP binding.

Belongs to the GHMP kinase family. Homoserine kinase subfamily.

The protein resides in the cytoplasm. The enzyme catalyses L-homoserine + ATP = O-phospho-L-homoserine + ADP + H(+). Its pathway is amino-acid biosynthesis; L-threonine biosynthesis; L-threonine from L-aspartate: step 4/5. Its function is as follows. Catalyzes the ATP-dependent phosphorylation of L-homoserine to L-homoserine phosphate. The protein is Homoserine kinase of Sulfolobus acidocaldarius (strain ATCC 33909 / DSM 639 / JCM 8929 / NBRC 15157 / NCIMB 11770).